We begin with the raw amino-acid sequence, 107 residues long: SH3 domain-binding glutamic acid-rich-like protein 2 (107 aa).

The SH3-binding motif lies at 61–67; sequence QGNPLPP.

It belongs to the SH3BGR family.

It localises to the nucleus. This Pongo abelii (Sumatran orangutan) protein is SH3 domain-binding glutamic acid-rich-like protein 2 (SH3BGRL2).